The chain runs to 131 residues: uncharacterized protein (131 aa).

The tract at residues 99–131 is disordered; that stretch reads NAIQEEEIDMEQQEEKEEKPREKGKKKSVEEEF. Residues 102-113 show a composition bias toward acidic residues; it reads QEEEIDMEQQEE. Residues 114 to 131 are compositionally biased toward basic and acidic residues; sequence KEEKPREKGKKKSVEEEF.

This is an uncharacterized protein from Sulfolobus islandicus rod-shaped virus 1 (SIRV-1).